The chain runs to 427 residues: Glucose-1-phosphate adenylyltransferase (427 aa).

Residues Tyr112, Gly177, 192 to 193 (EK), and Ser210 each bind alpha-D-glucose 1-phosphate.

Belongs to the bacterial/plant glucose-1-phosphate adenylyltransferase family. As to quaternary structure, homotetramer.

It carries out the reaction alpha-D-glucose 1-phosphate + ATP + H(+) = ADP-alpha-D-glucose + diphosphate. Its pathway is glycan biosynthesis; glycogen biosynthesis. Involved in the biosynthesis of ADP-glucose, a building block required for the elongation reactions to produce glycogen. Catalyzes the reaction between ATP and alpha-D-glucose 1-phosphate (G1P) to produce pyrophosphate and ADP-Glc. The protein is Glucose-1-phosphate adenylyltransferase of Methylobacillus flagellatus (strain ATCC 51484 / DSM 6875 / VKM B-1610 / KT).